We begin with the raw amino-acid sequence, 217 residues long: Methylthioribulose-1-phosphate dehydratase (217 aa).

Zn(2+)-binding residues include His106 and His108.

Belongs to the aldolase class II family. MtnB subfamily. Zn(2+) serves as cofactor.

The enzyme catalyses 5-(methylsulfanyl)-D-ribulose 1-phosphate = 5-methylsulfanyl-2,3-dioxopentyl phosphate + H2O. It functions in the pathway amino-acid biosynthesis; L-methionine biosynthesis via salvage pathway; L-methionine from S-methyl-5-thio-alpha-D-ribose 1-phosphate: step 2/6. In terms of biological role, catalyzes the dehydration of methylthioribulose-1-phosphate (MTRu-1-P) into 2,3-diketo-5-methylthiopentyl-1-phosphate (DK-MTP-1-P). The protein is Methylthioribulose-1-phosphate dehydratase of Xanthomonas campestris pv. campestris (strain 8004).